A 209-amino-acid polypeptide reads, in one-letter code: Urease accessory protein UreG (209 aa).

Position 18 to 25 (18 to 25) interacts with GTP; the sequence is GPVGSGKT.

Belongs to the SIMIBI class G3E GTPase family. UreG subfamily. Homodimer. UreD, UreF and UreG form a complex that acts as a GTP-hydrolysis-dependent molecular chaperone, activating the urease apoprotein by helping to assemble the nickel containing metallocenter of UreC. The UreE protein probably delivers the nickel.

It is found in the cytoplasm. In terms of biological role, facilitates the functional incorporation of the urease nickel metallocenter. This process requires GTP hydrolysis, probably effectuated by UreG. The chain is Urease accessory protein UreG from Cupriavidus necator (strain ATCC 17699 / DSM 428 / KCTC 22496 / NCIMB 10442 / H16 / Stanier 337) (Ralstonia eutropha).